Consider the following 1110-residue polypeptide: Nitric oxide synthase 3 (1110 aa).

The segment at 1-74 is disordered; the sequence is MGNFKSVGQE…PPEGPKFPRV (74 aa). A compositionally biased stretch (gly residues) spans 15–27; that stretch reads CGLGLGLGLGLCG. Low complexity predominate over residues 31–40; sequence PASPAPVSAS. Pro residues predominate over residues 47–69; it reads SSPPLPLPAPEHSPPLTRPPEGP. The Zn(2+) site is built by Cys97 and Cys102. The interval 101–489 is interaction with NOSIP; that stretch reads RCLGSLVFPR…PDPWKGSGTK (389 aa). (6R)-L-erythro-5,6,7,8-tetrahydrobiopterin is bound at residue Ser105. Position 117 is a phosphoserine (Ser117). Cys187 contributes to the heme b binding site. L-arginine-binding residues include Gln250, Trp359, Tyr360, and Glu364. Arg368 is a binding site for (6R)-L-erythro-5,6,7,8-tetrahydrobiopterin. An L-arginine-binding site is contributed by Asn369. (6R)-L-erythro-5,6,7,8-tetrahydrobiopterin-binding residues include Ala449, Trp450, and Phe463. Tyr478 serves as a coordination point for heme b. At Thr498 the chain carries Phosphothreonine. Residues Ser529, Glu530, Thr531, Arg533, Ser575, and Thr576 each coordinate FMN. Ser618, Ser636, and Ser641 each carry phosphoserine. The FMN site is built by Ser657, Cys664, Glu690, and Gln694. Arg779 contacts NADP(+). Position 801 (His801) interacts with FAD. Residues 821 to 848 are disordered; the sequence is EDPPPPAESVAVEQLEKGSPGGPPPGWV. The residue at position 839 (Ser839) is a Phosphoserine. FAD is bound by residues Arg941, Tyr943, Ser944, Thr959, Ala961, Tyr965, Val978, Cys979, and Ser980. NADP(+) contacts are provided by Thr1019, Arg1052, Ser1081, Arg1082, and Lys1088.

It belongs to the NOS family. Homodimer. Interacts with NOSIP and NOSTRIN. Interacts with HSP90AB1. Forms a complex with ASL, ASS1 and SLC7A1; the complex regulates cell-autonomous L-arginine synthesis and citrulline recycling while channeling extracellular L-arginine to nitric oxide synthesis pathway. Heme b is required as a cofactor. FAD serves as cofactor. The cofactor is FMN. Requires (6R)-L-erythro-5,6,7,8-tetrahydrobiopterin as cofactor.

It is found in the membrane. Its subcellular location is the caveola. The protein localises to the cytoplasm. It localises to the cytoskeleton. The protein resides in the golgi apparatus. It is found in the cell membrane. It catalyses the reaction 2 L-arginine + 3 NADPH + 4 O2 + H(+) = 2 L-citrulline + 2 nitric oxide + 3 NADP(+) + 4 H2O. With respect to regulation, stimulated by calcium/calmodulin. Inhibited by NOSIP and NOSTRIN. Produces nitric oxide (NO) which is implicated in vascular smooth muscle relaxation through a cGMP-mediated signal transduction pathway. NO mediates vascular endothelial growth factor (VEGF)-induced angiogenesis in coronary vessels and promotes blood clotting through the activation of platelets. This Cavia porcellus (Guinea pig) protein is Nitric oxide synthase 3 (NOS3).